Here is a 360-residue protein sequence, read N- to C-terminus: Probable dual-specificity RNA methyltransferase RlmN (360 aa).

Glu-97 functions as the Proton acceptor in the catalytic mechanism. Residues Asp-103–Asp-330 form the Radical SAM core domain. Cys-110 and Cys-335 are oxidised to a cystine. 3 residues coordinate [4Fe-4S] cluster: Cys-117, Cys-121, and Cys-124. Residues Gly-165–Glu-166, Ser-197, Ser-220–His-222, and His-292 contribute to the S-adenosyl-L-methionine site. Cys-335 functions as the S-methylcysteine intermediate in the catalytic mechanism.

The protein belongs to the radical SAM superfamily. RlmN family. [4Fe-4S] cluster serves as cofactor.

It localises to the cytoplasm. It catalyses the reaction adenosine(2503) in 23S rRNA + 2 reduced [2Fe-2S]-[ferredoxin] + 2 S-adenosyl-L-methionine = 2-methyladenosine(2503) in 23S rRNA + 5'-deoxyadenosine + L-methionine + 2 oxidized [2Fe-2S]-[ferredoxin] + S-adenosyl-L-homocysteine. It carries out the reaction adenosine(37) in tRNA + 2 reduced [2Fe-2S]-[ferredoxin] + 2 S-adenosyl-L-methionine = 2-methyladenosine(37) in tRNA + 5'-deoxyadenosine + L-methionine + 2 oxidized [2Fe-2S]-[ferredoxin] + S-adenosyl-L-homocysteine. Specifically methylates position 2 of adenine 2503 in 23S rRNA and position 2 of adenine 37 in tRNAs. This is Probable dual-specificity RNA methyltransferase RlmN from Gemmatimonas aurantiaca (strain DSM 14586 / JCM 11422 / NBRC 100505 / T-27).